Consider the following 144-residue polypeptide: Maximins 4/H3 type 3 (144 aa).

The first 18 residues, 1-18 (MNFKYIIAVSFFIASAYA), serve as a signal peptide directing secretion. The propeptide occupies 19 to 43 (RTEEKDVQSLSQRDVLEEESLREIR). N70 carries the asparagine amide modification. Positions 74–123 (TAEDHEVMKRLEAVMRDLDSLDHPEEASERQTRGFNQEEIANLFTKKEKR) are excised as a propeptide. I143 is subject to Isoleucine amide.

It belongs to the bombinin family. In terms of tissue distribution, expressed by the skin glands.

Its subcellular location is the secreted. Its function is as follows. Maximin-4 shows antibacterial activity against both Gram-positive and Gram-negative bacteria. It also shows antimicrobial activity against the fungus C.albicans, but not against A.flavus nor P.uticale. It has little hemolytic activity. It does not possess a significant cytotoxicity against tumor cell lines. It does not possess a significant anti-HIV activity. Maximin-H3 shows antibacterial activity against both Gram-positive and Gram-negative bacteria. It also shows antimicrobial activity against the fungus C.albicans. Shows strong hemolytic activity. This chain is Maximins 4/H3 type 3, found in Bombina maxima (Giant fire-bellied toad).